We begin with the raw amino-acid sequence, 478 residues long: Bifunctional protein HldE (478 aa).

The tract at residues 1-318 (MKITLPDFTR…ENAIHARPES (318 aa)) is ribokinase. 195–198 (NLSE) serves as a coordination point for ATP. Aspartate 264 is a catalytic residue. The tract at residues 344–478 (MTNGVFDILH…KTIISGSGKN (135 aa)) is cytidylyltransferase.

It in the N-terminal section; belongs to the carbohydrate kinase PfkB family. In the C-terminal section; belongs to the cytidylyltransferase family. In terms of assembly, homodimer.

It catalyses the reaction D-glycero-beta-D-manno-heptose 7-phosphate + ATP = D-glycero-beta-D-manno-heptose 1,7-bisphosphate + ADP + H(+). The enzyme catalyses D-glycero-beta-D-manno-heptose 1-phosphate + ATP + H(+) = ADP-D-glycero-beta-D-manno-heptose + diphosphate. It participates in nucleotide-sugar biosynthesis; ADP-L-glycero-beta-D-manno-heptose biosynthesis; ADP-L-glycero-beta-D-manno-heptose from D-glycero-beta-D-manno-heptose 7-phosphate: step 1/4. The protein operates within nucleotide-sugar biosynthesis; ADP-L-glycero-beta-D-manno-heptose biosynthesis; ADP-L-glycero-beta-D-manno-heptose from D-glycero-beta-D-manno-heptose 7-phosphate: step 3/4. Catalyzes the phosphorylation of D-glycero-D-manno-heptose 7-phosphate at the C-1 position to selectively form D-glycero-beta-D-manno-heptose-1,7-bisphosphate. Its function is as follows. Catalyzes the ADP transfer from ATP to D-glycero-beta-D-manno-heptose 1-phosphate, yielding ADP-D-glycero-beta-D-manno-heptose. This Erwinia tasmaniensis (strain DSM 17950 / CFBP 7177 / CIP 109463 / NCPPB 4357 / Et1/99) protein is Bifunctional protein HldE.